The sequence spans 451 residues: D-inositol 3-phosphate glycosyltransferase (451 aa).

A 1D-myo-inositol 3-phosphate-binding site is contributed by His21. UDP-N-acetyl-alpha-D-glucosamine is bound by residues 27–28 and Gly35; that span reads QP. Residues 32 to 37, Lys90, Tyr123, Thr147, and Arg167 each bind 1D-myo-inositol 3-phosphate; that span reads DAGGMN. UDP-N-acetyl-alpha-D-glucosamine contacts are provided by Arg241, Lys246, and Gln305. Positions 314, 315, and 317 each coordinate Mg(2+). UDP-N-acetyl-alpha-D-glucosamine is bound by residues Glu327 and Glu335. Thr341 contacts Mg(2+).

Belongs to the glycosyltransferase group 1 family. MshA subfamily. In terms of assembly, homodimer.

The catalysed reaction is 1D-myo-inositol 3-phosphate + UDP-N-acetyl-alpha-D-glucosamine = 1D-myo-inositol 2-acetamido-2-deoxy-alpha-D-glucopyranoside 3-phosphate + UDP + H(+). Functionally, catalyzes the transfer of a N-acetyl-glucosamine moiety to 1D-myo-inositol 3-phosphate to produce 1D-myo-inositol 2-acetamido-2-deoxy-glucopyranoside 3-phosphate in the mycothiol biosynthesis pathway. The protein is D-inositol 3-phosphate glycosyltransferase of Nocardia farcinica (strain IFM 10152).